The chain runs to 338 residues: Fructose-1,6-bisphosphatase class 1 (338 aa).

The Mg(2+) site is built by Glu-92, Asp-114, Leu-116, and Asp-117. Substrate is bound by residues 117 to 120 (DGSS), Asn-210, Tyr-243, and Lys-276. A Mg(2+)-binding site is contributed by Glu-282.

The protein belongs to the FBPase class 1 family. Homotetramer. It depends on Mg(2+) as a cofactor.

It is found in the cytoplasm. It catalyses the reaction beta-D-fructose 1,6-bisphosphate + H2O = beta-D-fructose 6-phosphate + phosphate. It functions in the pathway carbohydrate biosynthesis; gluconeogenesis. The polypeptide is Fructose-1,6-bisphosphatase class 1 (Maridesulfovibrio salexigens (strain ATCC 14822 / DSM 2638 / NCIMB 8403 / VKM B-1763) (Desulfovibrio salexigens)).